The following is a 30-amino-acid chain: Thylakoid lumenal 17 kDa protein (30 aa).

The protein localises to the plastid. It is found in the chloroplast thylakoid lumen. The sequence is that of Thylakoid lumenal 17 kDa protein from Spinacia oleracea (Spinach).